An 878-amino-acid chain; its full sequence is Splicing factor 3B subunit 2 (878 aa).

Over residues 1-10 the composition is skewed to basic and acidic residues; sequence MAAEHPEPPK. Disordered stretches follow at residues 1-25 and 67-136; these read MAAE…GHYG and RPVL…LRVG. A Glycyl lysine isopeptide (Lys-Gly) (interchain with G-Cter in SUMO2) cross-link involves residue Lys10. Positions 24-58 constitute an SAP domain; the sequence is YGAWAAQELQARLAEIGAPIQGSREELVERLQTYT. 2 stretches are compositionally biased toward pro residues: residues 91–114 and 122–133; these read PMPP…PPPG and AHPPNLGPPPPL. Residues 140–177 are a coiled coil; sequence ALSEEERLKLAQQQAALLMQQEERAKQAAVLMEQERQQ. 2 disordered regions span residues 183-356 and 383-436; these read GTAV…EYVT and KKEK…SKKK. Low complexity predominate over residues 201-221; the sequence is PLGPRVAAPVGPVVPTPTVLP. An omega-N-methylarginine mark is found at Arg205, Arg228, and Arg230. The span at 224–237 shows a compositional bias: pro residues; the sequence is APVPRPRGPPPPPG. Lys258 carries the N6-acetyllysine modification. Residues 260–269 are compositionally biased toward basic and acidic residues; the sequence is LQLKESRQEE. Lys263 is covalently cross-linked (Glycyl lysine isopeptide (Lys-Gly) (interchain with G-Cter in SUMO2)). At Ser272 the chain carries Phosphoserine. The residue at position 281 (Thr281) is a Phosphothreonine. Phosphoserine is present on residues Ser290 and Ser292. At Thr294 the chain carries Phosphothreonine. At Ser300 the chain carries Phosphoserine. The segment covering 305–321 has biased composition (basic residues); the sequence is EKNRKRRNRKKKKKPQR. The segment covering 330 to 342 has biased composition (basic and acidic residues); sequence SGDREKDSGRSRG. Residue Ser343 is modified to Phosphoserine. Residues Lys383 and Lys395 each participate in a glycyl lysine isopeptide (Lys-Gly) (interchain with G-Cter in SUMO2) cross-link. 2 stretches are compositionally biased toward basic and acidic residues: residues 383–397 and 405–414; these read KKEK…DKME and KGFEEEHKDS. Residues 384–533 are required for interaction with PRMT9; the sequence is KEKEKEPEKL…QEKEEQKTMK (150 aa). Residues Ser414, Ser418, and Ser419 each carry the phosphoserine modification. A Glycyl lysine isopeptide (Lys-Gly) (interchain with G-Cter in SUMO2) cross-link involves residue Lys475. Omega-N-methylarginine occurs at positions 491 and 498. Arg491 carries the symmetric dimethylarginine modification. Lys526 participates in a covalent cross-link: Glycyl lysine isopeptide (Lys-Gly) (interchain with G-Cter in SUMO2). Residues 674 to 740 form a disordered region; it reads AAEFQTKTEE…PGGFSSVPAG (67 aa). A compositionally biased stretch (acidic residues) spans 695 to 715; sequence EPSDEESSEEEEEEESDEDKP. A Glycyl lysine isopeptide (Lys-Gly) (interchain with G-Cter in SUMO2) cross-link involves residue Lys753. Thr763 is subject to Phosphothreonine. Glycyl lysine isopeptide (Lys-Gly) (interchain with G-Cter in SUMO2) cross-links involve residues Lys773, Lys826, and Lys840. Residues 827-852 are compositionally biased toward basic and acidic residues; it reads YEEHVREQQAQVEKEDFSDMVAEHAA. The tract at residues 827-878 is disordered; it reads YEEHVREQQAQVEKEDFSDMVAEHAAKQKQKKRKAQPQDSRGGSKKYKEFKF. Ser844 carries the post-translational modification Phosphoserine.

Component of the 17S U2 SnRNP complex, a ribonucleoprotein complex that contains small nuclear RNA (snRNA) U2 and a number of specific proteins. Part of the SF3B subcomplex of the 17S U2 SnRNP complex. SF3B associates with the splicing subcomplex SF3A and a 12S RNA unit to form the U2 small nuclear ribonucleoproteins complex (U2 snRNP). Within the SF3B complex, interacts directly with SF3B4. Found in a complex with PRMT9, SF3B2 and SF3B4. Interacts (Arg-491-methylated form) with SMN1 (via Tudor domain). Interacts with RBM7. Interacts with ERCC6. Component of the minor spliceosome. Within this complex, interacts with SCNM1 and CRIPT. Post-translationally, methylation at Arg-491 by PRMT9 is required for the interaction with SMN1.

It localises to the nucleus. The protein resides in the nucleus speckle. In terms of biological role, component of the 17S U2 SnRNP complex of the spliceosome, a large ribonucleoprotein complex that removes introns from transcribed pre-mRNAs. The 17S U2 SnRNP complex (1) directly participates in early spliceosome assembly and (2) mediates recognition of the intron branch site during pre-mRNA splicing by promoting the selection of the pre-mRNA branch-site adenosine, the nucleophile for the first step of splicing. Within the 17S U2 SnRNP complex, SF3B2 is part of the SF3B subcomplex, which is required for 'A' complex assembly formed by the stable binding of U2 snRNP to the branchpoint sequence in pre-mRNA. Sequence independent binding of SF3A and SF3B subcomplexes upstream of the branch site is essential, it may anchor U2 snRNP to the pre-mRNA. May also be involved in the assembly of the 'E' complex. Also acts as a component of the minor spliceosome, which is involved in the splicing of U12-type introns in pre-mRNAs. The polypeptide is Splicing factor 3B subunit 2 (Mus musculus (Mouse)).